The chain runs to 483 residues: Pre-glycoprotein polyprotein GP complex (483 aa).

Gly2 is lipidated: N-myristoyl glycine; by host. At 2–17 (GQFISFMQEIPIFLQE) the chain is on the extracellular side. Residues 18 to 32 (ALNIALVAVSLICIV) form a helical membrane-spanning segment. Position 33 (Lys33) is a topological domain, cytoplasmic. A helical transmembrane segment spans residues 34-53 (GLVNLYRCGLFQLMVFLVLA). 2 consecutive stretches face the extracellular side: residues 54-58 (GRSCS) and 59-422 (EETF…TLVD). Residue Cys57 participates in Zn(2+) binding. N-linked (GlcNAc...) asparagine; by host glycosylation is found at Asn83 and Asn95. Cystine bridges form between Cys92-Cys224, Cys134-Cys162, Cys205-Cys211, Cys269-Cys282, Cys291-Cys300, and Cys354-Cys375. N-linked (GlcNAc...) asparagine; by host glycosylation is found at Asn164 and Asn176. N-linked (GlcNAc...) asparagine; by host glycosylation is found at Asn355, Asn363, Asn380, and Asn385. A helical transmembrane segment spans residues 423-443 (ICFWSTVFFTSTLFLHLIGFP). Topologically, residues 444-483 (THEHIRGEGCPLPHRLNSMGGCRCGKYLPLKKPTIWHRRH) are cytoplasmic. 7 residues coordinate Zn(2+): His445, His447, Cys453, His457, Cys465, Cys467, and His483.

Belongs to the arenaviridae GPC protein family. As to quaternary structure, homotetramer; disulfide-linked. In terms of assembly, homotetramer. GP2 homotetramers bind through ionic interactions with GP1 homotetramers to form the GP complex together with the stable signal peptide. The GP-C polyprotein interacts with the host protease MBTPS1/SKI-1 resulting in the polyprotein processing. Post-translationally, specific enzymatic cleavages in vivo yield mature proteins. GP-C polyprotein is cleaved in the endoplasmic reticulum by the host protease MBTPS1. Only cleaved glycoprotein is incorporated into virions. The SSP remains stably associated with the GP complex following cleavage by signal peptidase and plays crucial roles in the trafficking of GP through the secretory pathway. In terms of processing, myristoylation is necessary for GP2-mediated fusion activity.

Its subcellular location is the virion membrane. The protein resides in the host endoplasmic reticulum membrane. The protein localises to the host Golgi apparatus membrane. It is found in the host cell membrane. Functionally, class I viral fusion protein that directs fusion of viral and host endosomal membranes, leading to delivery of the nucleocapsid into the cytoplasm. Membrane fusion is mediated by irreversible conformational changes induced upon acidification in the endosome. Stable signal peptide (SSP): cleaved and functions as a signal peptide. In addition, it is also retained as the third component of the GP complex. The SSP is required for efficient glycoprotein expression, post-translational maturation cleavage of GP1 and GP2, glycoprotein transport to the cell surface plasma membrane, formation of infectious virus particles, and acid pH-dependent glycoprotein-mediated cell fusion. Its function is as follows. Interacts with the host receptor. In Tacaribe virus (strain V5) (TCRV), this protein is Pre-glycoprotein polyprotein GP complex.